The primary structure comprises 122 residues: Large ribosomal subunit protein uL14 (122 aa).

Belongs to the universal ribosomal protein uL14 family. Part of the 50S ribosomal subunit. Forms a cluster with proteins L3 and L19. In the 70S ribosome, L14 and L19 interact and together make contacts with the 16S rRNA in bridges B5 and B8.

In terms of biological role, binds to 23S rRNA. Forms part of two intersubunit bridges in the 70S ribosome. This is Large ribosomal subunit protein uL14 from Lawsonia intracellularis (strain PHE/MN1-00).